A 460-amino-acid chain; its full sequence is Bifunctional beta-D-glucosidase/beta-D-fucosidase (460 aa).

The active-site Proton donor is the Glu168. The Nucleophile role is filled by Glu362.

This sequence belongs to the glycosyl hydrolase 1 family. In terms of assembly, monomer.

Its subcellular location is the secreted. The enzyme catalyses Hydrolysis of terminal, non-reducing beta-D-glucosyl residues with release of beta-D-glucose.. The catalysed reaction is Hydrolysis of terminal non-reducing beta-D-fucose residues in beta-D-fucosides.. Its activity is regulated as follows. Inhibited by Cu(2+), Ag(+) and Hg(+), but not by other cations such as Mg(2+), Ca(2+), Mn(2+) and Co(2+). Inhibited by 1-amino-1-deoxy-D-glucose and p-chloromercuribenzoic acid, but not by EDTA or dithiothreitol. Inhibited by the disaccharides sucrose, lactose and cellobiose. The monosaccharides D-fructose, D-mannose, D-xylose and D-glucose increase the beta-D-fucosidase activity, but not the beta-D-glucosidase activity. D-glucose inhibits the beta-D-glucosidase activity, but promotes the beta-D-fucosidase activity. D-fucose inhibits the beta-D-glucosidase activity and does not significantly affect the beta-D-fucosidase activity. In terms of biological role, bifunctional beta-D-glucosidase/beta-D-fucosidase. Activity towards pNP-beta-D-fucoside is about 80-85% of the activity towards pNP-beta-D-glucoside. Also has slight activity (less than 10%) towards pNP-beta-D-galactoside, and very low activity (less than 1%) towards pNP-beta-D-xyloside. Hydrolyzes laminaribiose, sophorose, cellobiose and gentobiose. Not active against maltose, pNP-alpha-D-glucoside or pNP-beta-L-fucoside. In Bifidobacterium breve, this protein is Bifunctional beta-D-glucosidase/beta-D-fucosidase.